We begin with the raw amino-acid sequence, 284 residues long: Bifunctional protein FolD 1 (284 aa).

Residues 166–168 and Ile232 each bind NADP(+); that span reads GAS.

This sequence belongs to the tetrahydrofolate dehydrogenase/cyclohydrolase family. In terms of assembly, homodimer.

It catalyses the reaction (6R)-5,10-methylene-5,6,7,8-tetrahydrofolate + NADP(+) = (6R)-5,10-methenyltetrahydrofolate + NADPH. It carries out the reaction (6R)-5,10-methenyltetrahydrofolate + H2O = (6R)-10-formyltetrahydrofolate + H(+). The protein operates within one-carbon metabolism; tetrahydrofolate interconversion. In terms of biological role, catalyzes the oxidation of 5,10-methylenetetrahydrofolate to 5,10-methenyltetrahydrofolate and then the hydrolysis of 5,10-methenyltetrahydrofolate to 10-formyltetrahydrofolate. This Pseudomonas syringae pv. tomato (strain ATCC BAA-871 / DC3000) protein is Bifunctional protein FolD 1.